The following is a 970-amino-acid chain: MCADTTAETPEYKDTLNLPKTDFPMRAGLPAREPQWLERWEKIGVYDRLREKQGRAPFTLHDGPPYANGHLHIGHALNKTIKDMIVRSHQMMGFDARYVPGWDCHGLPIEWKIEEQYRKKGKSKDDVNVVEFRQECRRFAEGWIDIQREEFKRLGITGNWADPYVTMDYHAEAVIADEFMKFLMNGTLYQGSKPVMWSPIEQTALAEAEVEYHDKESFTIWVKFRAVNSGDLDGAQVVIWTTTPWTIPSNKAVVYGKDIAYGLYEITGTPEECWASVGDKYILADKLADDVMRRARLDPDMYRRVGDVDPSQIGGLTHPLHGAEGGNGEWDDIRDFRAAEFVTDTEGTGFVHCAPSHGMEEFELYRDLGMLEQVITYNVMDDGSFRADLPFFGGKYILSRKGGEGDANKTVIDKLVEVGGLLARGKIKHSYPHSWRSKAPIIYRNTPQWFASVDRPVNDGQDSYGKTIRERALTSIDQLVKFTPQTGRNRLYSMIEARPDWVLSRQRAWGVPLTCFTRKGALPTDADFLLRDPAVNARIFAAFEAEGADCWYAEGAKERFLGNDYKADEWDQVFDVLDVWFDSGSTHAFVLRDREDGTADGIADVYMEGTDQHRGWFHSSLLQACGTLGRAPYRNVVTHGFTLDEKGMKMSKSLGNTIVPDEVVKQYGADILRLWVAQTDYTADQRIGPEILKGVADSYRRLRNTMRFMLGSLSDFTEADRIEDPAEMPPLERWVLSRMAELDEQVRKGYAGFDFQGVYSAVFNFATVDLSAFYFDIRKDVLYCDGDTTRRRAARTVLDLLFHRLTTWLAPILVFTMEEVWLERYPGEGSSVHLVDFPETPASWRNPQNESNVARVRRVRRVVTAALEIQRRDKVIGSSLEAAPVVHVEDAETRALLAQIDIDDLCITSGLTVSADPAPAEAFRLPEIEGVGVVFEMAEGEKCQRCWKILPDVGRHAHAGVCGRCDAALG.

Residues Pro-65 to His-75 carry the 'HIGH' region motif. Position 608 (Glu-608) interacts with L-isoleucyl-5'-AMP. The short motif at Lys-649–Ser-653 is the 'KMSKS' region element. Lys-652 is an ATP binding site. The Zn(2+) site is built by Cys-943, Cys-946, Cys-962, and Cys-965.

It belongs to the class-I aminoacyl-tRNA synthetase family. IleS type 1 subfamily. As to quaternary structure, monomer. The cofactor is Zn(2+).

It localises to the cytoplasm. The catalysed reaction is tRNA(Ile) + L-isoleucine + ATP = L-isoleucyl-tRNA(Ile) + AMP + diphosphate. In terms of biological role, catalyzes the attachment of isoleucine to tRNA(Ile). As IleRS can inadvertently accommodate and process structurally similar amino acids such as valine, to avoid such errors it has two additional distinct tRNA(Ile)-dependent editing activities. One activity is designated as 'pretransfer' editing and involves the hydrolysis of activated Val-AMP. The other activity is designated 'posttransfer' editing and involves deacylation of mischarged Val-tRNA(Ile). In Ruegeria pomeroyi (strain ATCC 700808 / DSM 15171 / DSS-3) (Silicibacter pomeroyi), this protein is Isoleucine--tRNA ligase.